A 71-amino-acid polypeptide reads, in one-letter code: Small ribosomal subunit protein bS21 (71 aa).

Positions 40-71 (KPTQVRKRKQAAAVKRHMKRLNREQQRRQRPY) are disordered. Over residues 43–59 (QVRKRKQAAAVKRHMKR) the composition is skewed to basic residues. Over residues 60–71 (LNREQQRRQRPY) the composition is skewed to basic and acidic residues.

This sequence belongs to the bacterial ribosomal protein bS21 family.

This chain is Small ribosomal subunit protein bS21, found in Halorhodospira halophila (strain DSM 244 / SL1) (Ectothiorhodospira halophila (strain DSM 244 / SL1)).